Reading from the N-terminus, the 260-residue chain is MTSDALTIGRYTFTSRLFVGTGKYKDLDETRRALEASGAEVVTVALRRVNLKERGEGSMMSLLQQGRVTILPNTAGCYTVEDAVRTCRLARELGLSDLVKLEVIGDERTLFPDNEATLEAARILVKEGFTVLPYCMDDPIVCRKLEDIGCAAVMPLAAPIGSGLGIRNPYNLMIIRETAKVPVIVDAGVGTASDAAVAMELGCDGVLMNTAIAGARDPILMAQAMKDAVRAGRMAYLAGRMPKKLYATASSPEQGKIAAL.

Lys100 (schiff-base intermediate with DXP) is an active-site residue. 1-deoxy-D-xylulose 5-phosphate contacts are provided by residues Gly161, 187–188 (AG), and 209–210 (NT).

This sequence belongs to the ThiG family. In terms of assembly, homotetramer. Forms heterodimers with either ThiH or ThiS.

The protein resides in the cytoplasm. It carries out the reaction [ThiS sulfur-carrier protein]-C-terminal-Gly-aminoethanethioate + 2-iminoacetate + 1-deoxy-D-xylulose 5-phosphate = [ThiS sulfur-carrier protein]-C-terminal Gly-Gly + 2-[(2R,5Z)-2-carboxy-4-methylthiazol-5(2H)-ylidene]ethyl phosphate + 2 H2O + H(+). It functions in the pathway cofactor biosynthesis; thiamine diphosphate biosynthesis. In terms of biological role, catalyzes the rearrangement of 1-deoxy-D-xylulose 5-phosphate (DXP) to produce the thiazole phosphate moiety of thiamine. Sulfur is provided by the thiocarboxylate moiety of the carrier protein ThiS. In vitro, sulfur can be provided by H(2)S. The sequence is that of Thiazole synthase from Sorangium cellulosum (strain So ce56) (Polyangium cellulosum (strain So ce56)).